The following is a 461-amino-acid chain: Inositol-trisphosphate 3-kinase A (461 aa).

The tract at residues 1-29 is disordered; the sequence is MTLPGGPTGMARPGGARPCSPGLERAPRR. The interval 1-133 is required for cytoskeleton location; sequence MTLPGGPTGM…SVSSTGSSSL (133 aa). 3 positions are modified to omega-N-methylarginine: arginine 35, arginine 55, and arginine 62. Positions 49–160 are disordered; the sequence is AAAGEPRARG…GNVQLEAGED (112 aa). Residues 118–134 show a composition bias toward low complexity; that stretch reads RRLSTSSVSSTGSSSLL. Serine 137 and serine 197 each carry phosphoserine. ATP contacts are provided by residues serine 197, lysine 209, 249 to 251, and aspartate 262; that span reads QDL. Positions 264 and 285 each coordinate substrate. The calmodulin-binding stretch occupies residues 287–295; that stretch reads DMYKKMLAV. 312–319 is a binding site for substrate; that stretch reads KPRYMQWR. 2 residues coordinate ATP: lysine 336 and aspartate 416. Lysine 419 lines the substrate pocket.

The protein belongs to the inositol phosphokinase (IPK) family. As to expression, expressed in brain.

Its subcellular location is the cytoplasm. The protein resides in the cytoskeleton. It catalyses the reaction 1D-myo-inositol 1,4,5-trisphosphate + ATP = 1D-myo-inositol 1,3,4,5-tetrakisphosphate + ADP + H(+). Activated by calcium/calmodulin. Functionally, catalyzes the phosphorylation of 1D-myo-inositol 1,4,5-trisphosphate (InsP3) into 1D-myo-inositol 1,3,4,5-tetrakisphosphate and participates to the regulation of calcium homeostasis. This Homo sapiens (Human) protein is Inositol-trisphosphate 3-kinase A.